We begin with the raw amino-acid sequence, 347 residues long: Isopentenyl-diphosphate delta-isomerase (347 aa).

A substrate-binding site is contributed by 9–10 (RK). FMN is bound by residues Ser67, 68–70 (SMT), Ser98, and Asn127. Substrate is bound at residue 98-100 (SQR). Residue Gln162 coordinates substrate. Glu163 contacts Mg(2+). FMN is bound by residues Lys194, Thr224, 274–276 (GIK), and 295–296 (AA).

This sequence belongs to the IPP isomerase type 2 family. As to quaternary structure, homooctamer. Dimer of tetramers. The cofactor is FMN. NADPH serves as cofactor. It depends on Mg(2+) as a cofactor.

The protein resides in the cytoplasm. The catalysed reaction is isopentenyl diphosphate = dimethylallyl diphosphate. Its function is as follows. Involved in the biosynthesis of isoprenoids. Catalyzes the 1,3-allylic rearrangement of the homoallylic substrate isopentenyl (IPP) to its allylic isomer, dimethylallyl diphosphate (DMAPP). The polypeptide is Isopentenyl-diphosphate delta-isomerase (Pseudescherichia vulneris (Escherichia vulneris)).